The primary structure comprises 327 residues: Gonadotropin-releasing hormone receptor (327 aa).

Residues 1–38 lie on the Extracellular side of the membrane; the sequence is MANNASLEQDQNHCSAINNSIPLTQGKLPTLTLSGKIR. N-linked (GlcNAc...) asparagine glycans are attached at residues asparagine 4 and asparagine 18. The helical transmembrane segment at 39 to 58 threads the bilayer; sequence VTVTFFLFLLSTAFNASFLV. Residues 59–77 are Cytoplasmic-facing; that stretch reads KLQRWTQKRKKGKKLSRMK. The chain crosses the membrane as a helical span at residues 78–97; sequence VLLKHLTLANLLETLIVMPL. Over 98–115 the chain is Extracellular; that stretch reads DGMWNITVQWYAGEFLCK. Asparagine 102 is a glycosylation site (N-linked (GlcNAc...) asparagine). Residues cysteine 114 and cysteine 195 are joined by a disulfide bond. Residues 116 to 137 traverse the membrane as a helical segment; the sequence is VLSYLKLFSMYAPAFMMVVISL. Over 138 to 164 the chain is Cytoplasmic; it reads DRSLAVTQPLAVQSKSKLERSMTSLAW. The chain crosses the membrane as a helical span at residues 165–184; the sequence is ILSIVFAGPQLYIFRMIYLA. At 185–211 the chain is on the extracellular side; sequence DGSGPAVFSQCVTHCSFPQWWHEAFYN. Residues 212 to 231 traverse the membrane as a helical segment; it reads FFTFSCLFIIPLLIMLICNA. The Cytoplasmic segment spans residues 232–280; that stretch reads KIIFALTRVLHQDPRKLQLNQSKNNIPRARLRTLKMTVAFGTSFVICWT. A helical membrane pass occupies residues 281–299; that stretch reads PYYVLGIWYWFDPEMLNRV. The Extracellular segment spans residues 300 to 305; it reads SEPVNH. A helical transmembrane segment spans residues 306-325; that stretch reads FFFLFAFLNPCFDPLIYGYF. The Cytoplasmic segment spans residues 326-327; the sequence is SL.

It belongs to the G-protein coupled receptor 1 family.

It localises to the cell membrane. Functionally, receptor for gonadotropin releasing hormone (GnRH) that mediates the action of GnRH to stimulate the secretion of the gonadotropic hormones luteinizing hormone (LH) and follicle-stimulating hormone (FSH). This receptor mediates its action by association with G-proteins that activate a phosphatidylinositol-calcium second messenger system. In Rattus norvegicus (Rat), this protein is Gonadotropin-releasing hormone receptor (Gnrhr).